A 107-amino-acid polypeptide reads, in one-letter code: Large ribosomal subunit protein uL24 (107 aa).

It belongs to the universal ribosomal protein uL24 family. As to quaternary structure, part of the 50S ribosomal subunit.

Its function is as follows. One of two assembly initiator proteins, it binds directly to the 5'-end of the 23S rRNA, where it nucleates assembly of the 50S subunit. In terms of biological role, one of the proteins that surrounds the polypeptide exit tunnel on the outside of the subunit. This is Large ribosomal subunit protein uL24 from Mycobacterium ulcerans (strain Agy99).